Reading from the N-terminus, the 1025-residue chain is DNA ligase 4 (1025 aa).

Residues 1-36 form a disordered region; it reads MMQPTPAPSSAPGSPQRTQAEPEMETPSYPQPPQNV. ATP-binding residues include glutamate 289, lysine 291, leucine 292, arginine 296, glutamate 349, phenylalanine 387, glutamate 447, lysine 452, lysine 469, and lysine 471. Lysine 291 serves as the catalytic N6-AMP-lysine intermediate. Position 349 (glutamate 349) interacts with Mg(2+). Glutamate 447 serves as a coordination point for Mg(2+). A BRCT 1 domain is found at 667 to 763; that stretch reads VKTDIFNGMK…EPAPFKKKYF (97 aa). The interval 773 to 904 is disordered; sequence ADEYNEDDGE…TTPDVDGDVK (132 aa). Composition is skewed to acidic residues over residues 775–785 and 806–816; these read EYNEDDGEEEG and SETEDEDEEQA. Basic and acidic residues predominate over residues 817-838; it reads PEIKEEQDGELHEWLKVDDRKS. A compositionally biased stretch (acidic residues) spans 845 to 870; the sequence is DEEDSVTEDDSDNADVADEEEPDLDD. A compositionally biased stretch (basic and acidic residues) spans 891 to 904; sequence RHRETTPDVDGDVK. Residues 915 to 1025 enclose the BRCT 2 domain; the sequence is DPDVIFKHLC…TLLDEEEFAP (111 aa).

This sequence belongs to the ATP-dependent DNA ligase family. Mg(2+) is required as a cofactor.

It localises to the nucleus. The catalysed reaction is ATP + (deoxyribonucleotide)n-3'-hydroxyl + 5'-phospho-(deoxyribonucleotide)m = (deoxyribonucleotide)n+m + AMP + diphosphate.. DNA ligase involved in DNA non-homologous end joining (NHEJ); required for double-strand break (DSB) repair. The protein is DNA ligase 4 (LIG4) of Coprinopsis cinerea (Inky cap fungus).